The primary structure comprises 268 residues: Tubulin-specific chaperone C (268 aa).

Residues P98–I255 form the C-CAP/cofactor C-like domain.

It localises to the cytoplasm. The protein resides in the cytoskeleton. Tubulin-folding protein; involved in the early step of the tubulin folding pathway. This is Tubulin-specific chaperone C (CIN2) from Saccharomyces cerevisiae (strain ATCC 204508 / S288c) (Baker's yeast).